The following is a 119-amino-acid chain: Large ribosomal subunit protein bL20 (119 aa).

Belongs to the bacterial ribosomal protein bL20 family.

Functionally, binds directly to 23S ribosomal RNA and is necessary for the in vitro assembly process of the 50S ribosomal subunit. It is not involved in the protein synthesizing functions of that subunit. The sequence is that of Large ribosomal subunit protein bL20 from Syntrophus aciditrophicus (strain SB).